The chain runs to 374 residues: Ribosomal RNA large subunit methyltransferase G (374 aa).

The protein belongs to the methyltransferase superfamily. RlmG family.

The protein resides in the cytoplasm. The enzyme catalyses guanosine(1835) in 23S rRNA + S-adenosyl-L-methionine = N(2)-methylguanosine(1835) in 23S rRNA + S-adenosyl-L-homocysteine + H(+). In terms of biological role, specifically methylates the guanine in position 1835 (m2G1835) of 23S rRNA. In Pseudomonas fluorescens (strain Pf0-1), this protein is Ribosomal RNA large subunit methyltransferase G.